Reading from the N-terminus, the 298-residue chain is NAD kinase (298 aa).

Asp80 functions as the Proton acceptor in the catalytic mechanism. Residues 80 to 81 (DG), 154 to 155 (ND), Arg182, Asp184, 195 to 200 (TAYALS), Ala219, and Gln253 each bind NAD(+).

It belongs to the NAD kinase family. It depends on a divalent metal cation as a cofactor.

Its subcellular location is the cytoplasm. The catalysed reaction is NAD(+) + ATP = ADP + NADP(+) + H(+). In terms of biological role, involved in the regulation of the intracellular balance of NAD and NADP, and is a key enzyme in the biosynthesis of NADP. Catalyzes specifically the phosphorylation on 2'-hydroxyl of the adenosine moiety of NAD to yield NADP. The polypeptide is NAD kinase (Acidovorax sp. (strain JS42)).